The chain runs to 193 residues: Chlorate reductase assembly chaperone protein (193 aa).

The protein belongs to the type II DMSO reductase enzyme chaperone family.

The protein localises to the cytoplasm. May function as a system-specific chaperone protein essential for the assembly of an active chlorate reductase ClrABC. The polypeptide is Chlorate reductase assembly chaperone protein (clrD) (Ideonella dechloratans).